The chain runs to 177 residues: Calerythrin (177 aa).

4 consecutive EF-hand domains span residues 5-40 (IASD…IAEA), 45-90 (AGAA…NLIF), 100-134 (VLGP…ALGM), and 134-169 (MSKA…FHFG). Ca(2+) is bound by residues Asp18, Asp20, Asn22, and Asp29. Asp113, Asn115, Asp117, Gln119, Glu124, Asp147, Asn149, Asn151, Glu153, and Glu158 together coordinate Ca(2+).

The protein is Calerythrin of Saccharopolyspora erythraea (Streptomyces erythraeus).